The following is a 318-amino-acid chain: Methionyl-tRNA formyltransferase (318 aa).

Residue serine 117 to proline 120 participates in (6S)-5,6,7,8-tetrahydrofolate binding.

Belongs to the Fmt family.

It carries out the reaction L-methionyl-tRNA(fMet) + (6R)-10-formyltetrahydrofolate = N-formyl-L-methionyl-tRNA(fMet) + (6S)-5,6,7,8-tetrahydrofolate + H(+). Attaches a formyl group to the free amino group of methionyl-tRNA(fMet). The formyl group appears to play a dual role in the initiator identity of N-formylmethionyl-tRNA by promoting its recognition by IF2 and preventing the misappropriation of this tRNA by the elongation apparatus. The protein is Methionyl-tRNA formyltransferase of Malacoplasma penetrans (strain HF-2) (Mycoplasma penetrans).